Consider the following 1109-residue polypeptide: DNA mismatch repair protein MSH7 (1109 aa).

2 disordered regions span residues 19–45 (TKGL…KEGD) and 61–86 (DEVR…KPAE). The segment covering 61-74 (DEVRGTDTPPEKVP) has biased composition (basic and acidic residues). Residue 853-860 (GPNMGGKS) participates in ATP binding.

This sequence belongs to the DNA mismatch repair MutS family. As to quaternary structure, heterodimer consisting of MSH2-MSH7 (MutS gamma).

It is found in the nucleus. Component of the post-replicative DNA mismatch repair system (MMR). Forms the heterodimer MutS gamma (MSH2-MSH7 heterodimer) which binds to DNA mismatches thereby initiating DNA repair. MutS gamma recognizes specifically the T/G single base mismatch, but not trinucleotide insertion-deletion loops (IDL). The chain is DNA mismatch repair protein MSH7 (MSH7) from Arabidopsis thaliana (Mouse-ear cress).